Consider the following 376-residue polypeptide: 23S rRNA (uracil(747)-C(5))-methyltransferase RlmC (376 aa).

4 residues coordinate [4Fe-4S] cluster: Cys3, Cys11, Cys14, and Cys88. Residues Gln213, Phe242, Glu263, and Asn308 each coordinate S-adenosyl-L-methionine. The Nucleophile role is filled by Cys335.

The protein belongs to the class I-like SAM-binding methyltransferase superfamily. RNA M5U methyltransferase family. RlmC subfamily.

It carries out the reaction uridine(747) in 23S rRNA + S-adenosyl-L-methionine = 5-methyluridine(747) in 23S rRNA + S-adenosyl-L-homocysteine + H(+). Catalyzes the formation of 5-methyl-uridine at position 747 (m5U747) in 23S rRNA. The chain is 23S rRNA (uracil(747)-C(5))-methyltransferase RlmC from Vibrio vulnificus (strain CMCP6).